Here is a 358-residue protein sequence, read N- to C-terminus: Alpha-2-HS-glycoprotein (358 aa).

An N-terminal signal peptide occupies residues M1–S18. The region spanning E27–E133 is the Cystatin fetuin-A-type 1 domain. 6 cysteine pairs are disulfide-bonded: C32/C349, C89/C100, C114/C132, C146/C149, C208/C218, and C229/C246. A glycan (N-linked (GlcNAc...) asparagine) is linked at N99. At S134 the chain carries Phosphoserine. T135 is modified (phosphothreonine). S138 is subject to Phosphoserine. Residues K144–V254 enclose the Cystatin fetuin-A-type 2 domain. N-linked (GlcNAc...) asparagine glycans are attached at residues N156 and N176. The tract at residues L257 to S288 is disordered. The span at N267–P282 shows a compositional bias: pro residues. Residues S318 and S320 each carry the phosphoserine modification. The tract at residues S320–P350 is disordered.

Belongs to the fetuin family. Phosphorylated by FAM20C in the extracellular medium. In terms of tissue distribution, bone marrow.

It is found in the secreted. The sequence is that of Alpha-2-HS-glycoprotein (AHSG) from Cavia porcellus (Guinea pig).